A 398-amino-acid chain; its full sequence is Bifunctional enzyme IspD/IspF (398 aa).

A 2-C-methyl-D-erythritol 4-phosphate cytidylyltransferase region spans residues 1–234 (MTNSPRTAAI…SRLMAALGDI (234 aa)). The interval 235-398 (RTGTGYDVHA…LPWGADGLAG (164 aa)) is 2-C-methyl-D-erythritol 2,4-cyclodiphosphate synthase. 2 residues coordinate a divalent metal cation: Asp-241 and His-243. 4-CDP-2-C-methyl-D-erythritol 2-phosphate-binding positions include 241–243 (DVH) and 267–268 (HS). Position 275 (His-275) interacts with a divalent metal cation. Residues 289–291 (DIG), 365–368 (TTSE), Phe-372, and Arg-375 each bind 4-CDP-2-C-methyl-D-erythritol 2-phosphate.

It in the N-terminal section; belongs to the IspD/TarI cytidylyltransferase family. IspD subfamily. The protein in the C-terminal section; belongs to the IspF family. Requires a divalent metal cation as cofactor.

It catalyses the reaction 2-C-methyl-D-erythritol 4-phosphate + CTP + H(+) = 4-CDP-2-C-methyl-D-erythritol + diphosphate. It carries out the reaction 4-CDP-2-C-methyl-D-erythritol 2-phosphate = 2-C-methyl-D-erythritol 2,4-cyclic diphosphate + CMP. It participates in isoprenoid biosynthesis; isopentenyl diphosphate biosynthesis via DXP pathway; isopentenyl diphosphate from 1-deoxy-D-xylulose 5-phosphate: step 2/6. Its pathway is isoprenoid biosynthesis; isopentenyl diphosphate biosynthesis via DXP pathway; isopentenyl diphosphate from 1-deoxy-D-xylulose 5-phosphate: step 4/6. In terms of biological role, bifunctional enzyme that catalyzes the formation of 4-diphosphocytidyl-2-C-methyl-D-erythritol from CTP and 2-C-methyl-D-erythritol 4-phosphate (MEP) (IspD), and catalyzes the conversion of 4-diphosphocytidyl-2-C-methyl-D-erythritol 2-phosphate (CDP-ME2P) to 2-C-methyl-D-erythritol 2,4-cyclodiphosphate (ME-CPP) with a corresponding release of cytidine 5-monophosphate (CMP) (IspF). This chain is Bifunctional enzyme IspD/IspF, found in Rhodopseudomonas palustris (strain ATCC BAA-98 / CGA009).